Here is a 129-residue protein sequence, read N- to C-terminus: Large ribosomal subunit protein bL12 (129 aa).

Belongs to the bacterial ribosomal protein bL12 family. As to quaternary structure, homodimer. Part of the ribosomal stalk of the 50S ribosomal subunit. Forms a multimeric L10(L12)X complex, where L10 forms an elongated spine to which 2 to 4 L12 dimers bind in a sequential fashion. Binds GTP-bound translation factors.

In terms of biological role, forms part of the ribosomal stalk which helps the ribosome interact with GTP-bound translation factors. Is thus essential for accurate translation. This is Large ribosomal subunit protein bL12 from Micrococcus luteus (strain ATCC 4698 / DSM 20030 / JCM 1464 / CCM 169 / CCUG 5858 / IAM 1056 / NBRC 3333 / NCIMB 9278 / NCTC 2665 / VKM Ac-2230) (Micrococcus lysodeikticus).